The following is a 394-amino-acid chain: MTLQESDKFATKAIHAGEHVDVHGSVIEPISLSTTFKQSSPANPIGTYEYSRSQNPNRENLERAVAALENAQYGLAFSSGSATTATILQSLPQGSHAVSIGDVYGGTHRYFTKVANAHGVETSFTNDLLNDLPQLIKENTKLVWIETPTNPTLKVTDIQKVADLIKKHAAGQDVILVVDNTFLSPYISNPLNFGADIVVHSATKYINGHSDVVLGVLATNNKPLYERLQFLQNAIGAIPSPFDAWLTHRGLKTLHLRVRQAALSANKIAEFLAADKENVVAVNYPGLKTHPNYDVVLKQHRDALGGGMISFRIKGGAEAASKFASSTRLFTLAESLGGIESLLEVPAVMTHGGIPKEAREASGVFDDLVRISVGIEDTDDLLEDIKQALKQATN.

The interval 37-56 (KQSSPANPIGTYEYSRSQNP) is disordered. Arg-52, Tyr-104, and Arg-109 together coordinate substrate. Lys-204 carries the post-translational modification N6-(pyridoxal phosphate)lysine. Glu-334 provides a ligand contact to substrate. Position 362 is a phosphoserine (Ser-362).

The protein belongs to the trans-sulfuration enzymes family. As to quaternary structure, homotetramer. It depends on pyridoxal 5'-phosphate as a cofactor.

It localises to the cytoplasm. The enzyme catalyses L,L-cystathionine + H2O = 2-oxobutanoate + L-cysteine + NH4(+). The protein operates within amino-acid biosynthesis; L-cysteine biosynthesis; L-cysteine from L-homocysteine and L-serine: step 2/2. Catalyzes the production of cysteine from cystathionine in the reverse transsulfuration pathway for the biosynthesis of sulfur-containing amino acids cysteine and methionine. In this pathway, homocysteine sulfur is converted to cysteine sulfur. Also has cystathionine beta-lyase and cystathionine gamma-synthase activities in vitro. Cystathionine beta-lyase may be physiological, while cystathionine gamma-synthase activity is not, as the required substrate O-succinyl-L-homoserine(OSH) does not occur naturally in S.cerevisiae. The sequence is that of Cystathionine gamma-lyase from Saccharomyces cerevisiae (strain ATCC 204508 / S288c) (Baker's yeast).